Consider the following 234-residue polypeptide: Zein-alpha GZ19AB11 (234 aa).

An N-terminal signal peptide occupies residues 1–21; the sequence is MAAKIFCLLMLLGLSASAATA.

Belongs to the zein family.

Its function is as follows. Zeins are major seed storage proteins. The protein is Zein-alpha GZ19AB11 of Zea mays (Maize).